Here is a 316-residue protein sequence, read N- to C-terminus: L-lactate dehydrogenase (316 aa).

NAD(+) contacts are provided by residues methionine 14, 14–150 (MIGG…IIGL), isoleucine 15, aspartate 35, tyrosine 67, glycine 81, phenylalanine 82, valine 125, asparagine 127, and leucine 150. Substrate is bound at residue arginine 95. The substrate site is built by arginine 158 and histidine 182. Histidine 182 functions as the Proton acceptor in the catalytic mechanism.

Belongs to the LDH/MDH superfamily. LDH family. Homotetramer.

It catalyses the reaction (S)-lactate + NAD(+) = pyruvate + NADH + H(+). The protein operates within fermentation; pyruvate fermentation to lactate; (S)-lactate from pyruvate: step 1/1. The sequence is that of L-lactate dehydrogenase from Plasmodium falciparum (isolate CDC / Honduras).